The primary structure comprises 337 residues: MIRVAINGFGRIGRNFARCWLGRENTNIELVAVNDTSDPRTNAHLLKYDSMLGKLKNVDITADDNSITVNGKTIKCVSDRNPENLPWKEWEIDLIIEATGVFVSKEGATKHINAGAKKVLITAPGKNEDGTFVMGVNHHDYDHNLHNIISNASCTTNCLAPIAKVLNDKFGIIKGSMTTTHSYTGDQRLLDASHRDLRRARAAAINIVPTSTGAAKAVALVIPELKGKLNGVALRVPTPNVSMVDFVVQVEKRTITEEVNQALKDASEGPLKGILDYSELQLVSSDYQGTDASSIVDANLTLVMGNDLVKVMAWYDNEWGYSQRVLDLAELVAEKWV.

NADP(+) contacts are provided by residues 11 to 12 (RI), D35, R80, and T122. D-glyceraldehyde 3-phosphate contacts are provided by residues 153–155 (SCT), T184, R199, 212–213 (TG), and R235. Residue C154 is the Nucleophile of the active site. N317 contacts NADP(+).

Homotetramer.

The protein localises to the cytoplasm. The catalysed reaction is D-glyceraldehyde 3-phosphate + phosphate + NADP(+) = (2R)-3-phospho-glyceroyl phosphate + NADPH + H(+). It carries out the reaction D-glyceraldehyde 3-phosphate + phosphate + NAD(+) = (2R)-3-phospho-glyceroyl phosphate + NADH + H(+). It participates in carbohydrate biosynthesis; Calvin cycle. Gap2 has a major role in carbon fixation as a component of the Calvin cycle. Catalyzes the oxidative phosphorylation of glyceraldehyde 3-phosphate (G3P) to 1,3-bisphosphoglycerate (BPG) using the cofactor NADP. The first reaction step involves the formation of a hemiacetal intermediate between G3P and a cysteine residue, and this hemiacetal intermediate is then oxidized to a thioester, with concomitant reduction of NADP to NADPH. The reduced NADPH is then exchanged with the second NAD, and the thioester is attacked by a nucleophilic inorganic phosphate to produce BPG. This Nostoc sp. (strain PCC 7120 / SAG 25.82 / UTEX 2576) protein is Glyceraldehyde-3-phosphate dehydrogenase 2 (gap2).